Reading from the N-terminus, the 207-residue chain is Small ribosomal subunit protein uS4 (207 aa).

A disordered region spans residues Cys32–Gln55. A compositionally biased stretch (polar residues) spans Gly42–Gly53. One can recognise an S4 RNA-binding domain in the interval Ser97 to Glu158.

This sequence belongs to the universal ribosomal protein uS4 family. In terms of assembly, part of the 30S ribosomal subunit. Contacts protein S5. The interaction surface between S4 and S5 is involved in control of translational fidelity.

In terms of biological role, one of the primary rRNA binding proteins, it binds directly to 16S rRNA where it nucleates assembly of the body of the 30S subunit. With S5 and S12 plays an important role in translational accuracy. This is Small ribosomal subunit protein uS4 from Paraburkholderia phytofirmans (strain DSM 17436 / LMG 22146 / PsJN) (Burkholderia phytofirmans).